The primary structure comprises 404 residues: XK-related protein 8 (404 aa).

Helical transmembrane passes span 14-34 (FVFS…DVWL), 44-64 (VTWF…VQTF), 169-189 (AVQF…VVDY), 209-229 (LIYF…LALC), 232-252 (VLSG…ALWA), 262-282 (SVAG…FSWF), 293-313 (SAIY…TWWC), and 324-344 (ALAL…FKAL).

The protein belongs to the XK family.

The protein resides in the cell membrane. It catalyses the reaction a 1,2-diacyl-sn-glycero-3-phospho-L-serine(in) = a 1,2-diacyl-sn-glycero-3-phospho-L-serine(out). Functionally, phospholipid scramblase that promotes phosphatidylserine exposure on apoptotic cell surface, possibly by mediating phospholipid scrambling. Phosphatidylserine is a specific marker only present at the surface of apoptotic cells and acts as a specific signal for engulfment. This chain is XK-related protein 8, found in Gasterosteus aculeatus (Three-spined stickleback).